Consider the following 517-residue polypeptide: Serine hydroxymethyltransferase 2, mitochondrial (517 aa).

Residues 1–31 constitute a mitochondrion transit peptide; that stretch reads MAMASALRRLSSSSNKPLQRLFNGGHLYSMS. Lys-287 carries the N6-(pyridoxal phosphate)lysine modification.

This sequence belongs to the SHMT family. As to quaternary structure, homotetramer. The cofactor is pyridoxal 5'-phosphate.

The protein resides in the mitochondrion. The enzyme catalyses (6R)-5,10-methylene-5,6,7,8-tetrahydrofolate + glycine + H2O = (6S)-5,6,7,8-tetrahydrofolate + L-serine. It participates in one-carbon metabolism; tetrahydrofolate interconversion. Catalyzes the interconversion of serine and glycine. The polypeptide is Serine hydroxymethyltransferase 2, mitochondrial (Flaveria pringlei).